The chain runs to 174 residues: Crossover junction endodeoxyribonuclease RuvC (174 aa).

Catalysis depends on residues Asp8, Glu69, and Asp141. Mg(2+) is bound by residues Asp8, Glu69, and Asp141.

This sequence belongs to the RuvC family. Homodimer which binds Holliday junction (HJ) DNA. The HJ becomes 2-fold symmetrical on binding to RuvC with unstacked arms; it has a different conformation from HJ DNA in complex with RuvA. In the full resolvosome a probable DNA-RuvA(4)-RuvB(12)-RuvC(2) complex forms which resolves the HJ. It depends on Mg(2+) as a cofactor.

Its subcellular location is the cytoplasm. It carries out the reaction Endonucleolytic cleavage at a junction such as a reciprocal single-stranded crossover between two homologous DNA duplexes (Holliday junction).. Functionally, the RuvA-RuvB-RuvC complex processes Holliday junction (HJ) DNA during genetic recombination and DNA repair. Endonuclease that resolves HJ intermediates. Cleaves cruciform DNA by making single-stranded nicks across the HJ at symmetrical positions within the homologous arms, yielding a 5'-phosphate and a 3'-hydroxyl group; requires a central core of homology in the junction. The consensus cleavage sequence is 5'-(A/T)TT(C/G)-3'. Cleavage occurs on the 3'-side of the TT dinucleotide at the point of strand exchange. HJ branch migration catalyzed by RuvA-RuvB allows RuvC to scan DNA until it finds its consensus sequence, where it cleaves and resolves the cruciform DNA. This is Crossover junction endodeoxyribonuclease RuvC from Xanthomonas oryzae pv. oryzae (strain MAFF 311018).